A 403-amino-acid chain; its full sequence is Poly(rC)-binding protein 4 (403 aa).

KH domains follow at residues 17–67, 101–154, and 241–293; these read TLTL…TITG, PVTL…TVSG, and TSSQ…TITG.

The protein localises to the cytoplasm. In terms of biological role, single-stranded nucleic acid binding protein that binds preferentially to oligo dC. The sequence is that of Poly(rC)-binding protein 4 (PCBP4) from Bos taurus (Bovine).